The primary structure comprises 776 residues: Reticulon-1 (776 aa).

Disordered stretches follow at residues 1 to 101 (MAAP…KDGE), 137 to 168 (SESP…DSGI), 205 to 245 (VKHQ…PAPV), and 285 to 580 (LTEI…APPP). A Phosphoserine modification is found at serine 327. Low complexity predominate over residues 328 to 341 (PGSITPPSSGTEPS). Phosphoserine is present on residues serine 350, serine 352, and serine 487. The segment covering 497 to 511 (AIREETGVRAEERAP) has biased composition (basic and acidic residues). One can recognise a Reticulon domain in the interval 589–776 (AIDLLYWRDI…KIPGAKRHAE (188 aa)). The next 2 membrane-spanning stretches (helical) occupy residues 603 to 623 (IVFG…VVSV) and 705 to 725 (FAVL…LTLL).

Interacts with NDRG1. Interacts with BACE1. In terms of assembly, interacts with TMEM33. As to quaternary structure, interacts with UGCG; regulates the ceramide glucosyltransferase activity of UGCG. Isoforms RTN1-A and RTN1-B are phosphorylated. As to expression, expressed in neural and neuroendocrine tissues and cell cultures derived therefrom. Expression of isoform RTN1-C is strongly correlated with neuronal differentiation.

The protein localises to the endoplasmic reticulum membrane. It is found in the golgi apparatus membrane. Its function is as follows. Inhibits amyloid precursor protein processing, probably by blocking BACE1 activity. This Homo sapiens (Human) protein is Reticulon-1 (RTN1).